Here is an 83-residue protein sequence, read N- to C-terminus: MKTLLLTLVVVTIVCLDLGYTMTCCNQQSSQPKTTTTCAGGESSCYKKTWSDHRGSRTERGCGCPHVKPGIKLTCCETDECNN.

An N-terminal signal peptide occupies residues 1–21; that stretch reads MKTLLLTLVVVTIVCLDLGYT. Cystine bridges form between Cys24/Cys45, Cys38/Cys62, Cys64/Cys75, and Cys76/Cys81.

This sequence belongs to the three-finger toxin family. Short-chain subfamily. Type I alpha-neurotoxin sub-subfamily. Expressed by the venom gland.

It localises to the secreted. In terms of biological role, bird-specific neurotoxin (tested on chicken) that acts as a pseudo-irreversible antagonist at the nicotinic acetylcholine receptor (nAChR) of the skeletal neuromuscular junction. Has no significant effect on the electrically-induced twitches of the rat isolated phrenic nerve-diaphragm preparation. This is Alpha-elapitoxin-Ppr1 from Pseudechis porphyriacus (Red-bellied black snake).